The following is a 629-amino-acid chain: Hemocyanin C chain (629 aa).

Residues His-175, His-179, His-206, His-326, His-330, and His-366 each coordinate Cu cation. An N-linked (GlcNAc...) asparagine glycan is attached at Asn-451. A disulfide bridge connects residues Cys-537 and Cys-585. Asn-618 carries an N-linked (GlcNAc...) asparagine glycan.

The protein belongs to the tyrosinase family. Hemocyanin subfamily. As to quaternary structure, tarantula hemocyanin is a 24-chain polymer with seven different chains identified. As to expression, hemolymph.

It is found in the secreted. Its subcellular location is the extracellular space. Hemocyanins are copper-containing oxygen carriers occurring freely dissolved in the hemolymph of many mollusks and arthropods. The protein is Hemocyanin C chain (HCC) of Aphonopelma sp. (American tarantula).